The chain runs to 98 residues: NADH-ubiquinone oxidoreductase chain 4L (98 aa).

Transmembrane regions (helical) follow at residues 1-21 (MSLV…GLLM), 29-49 (SLLC…LMIL), and 61-81 (IILL…LVMV).

The protein belongs to the complex I subunit 4L family. As to quaternary structure, core subunit of respiratory chain NADH dehydrogenase (Complex I) which is composed of 45 different subunits.

It localises to the mitochondrion inner membrane. It catalyses the reaction a ubiquinone + NADH + 5 H(+)(in) = a ubiquinol + NAD(+) + 4 H(+)(out). Functionally, core subunit of the mitochondrial membrane respiratory chain NADH dehydrogenase (Complex I) which catalyzes electron transfer from NADH through the respiratory chain, using ubiquinone as an electron acceptor. Part of the enzyme membrane arm which is embedded in the lipid bilayer and involved in proton translocation. The polypeptide is NADH-ubiquinone oxidoreductase chain 4L (MT-ND4L) (Pantholops hodgsonii (Chiru)).